The primary structure comprises 117 residues: Ribosome-binding factor A (117 aa).

It belongs to the RbfA family. Monomer. Binds 30S ribosomal subunits, but not 50S ribosomal subunits or 70S ribosomes.

The protein localises to the cytoplasm. Its function is as follows. One of several proteins that assist in the late maturation steps of the functional core of the 30S ribosomal subunit. Associates with free 30S ribosomal subunits (but not with 30S subunits that are part of 70S ribosomes or polysomes). Required for efficient processing of 16S rRNA. May interact with the 5'-terminal helix region of 16S rRNA. This chain is Ribosome-binding factor A, found in Lactiplantibacillus plantarum (strain ATCC BAA-793 / NCIMB 8826 / WCFS1) (Lactobacillus plantarum).